A 1106-amino-acid chain; its full sequence is Protein shuttle craft (1106 aa).

Disordered stretches follow at residues 7-26 and 189-371; these read QLTN…AMAD and PAAA…KLSQ. Low complexity predominate over residues 189–201; that stretch reads PAAATTNGNSTAS. 2 stretches are compositionally biased toward basic and acidic residues: residues 232–270 and 278–323; these read NYER…RDSR and RRSD…RDRI. T335 carries the post-translational modification Phosphothreonine. Phosphoserine occurs at positions 336, 339, 343, and 354. The segment covering 336–354 has biased composition (polar residues); sequence SNESAHPSPEKQSQLQQIS. The RING-type; atypical zinc finger occupies 386–433; it reads CLVCVEAIKSHQPTWSCRNCYHMLHLKCTITWASSSKSEVGWRCPACQ. 8 consecutive NF-X1-type zinc fingers follow at residues 474–492, 527–546, 585–604, 644–667, 706–725, 733–752, 844–867, and 876–896; these read CSHA…PCQA, CGEH…ACSE, CGHH…PCKL, CGKP…PCPK, CGKH…DCPL, CGKH…PCYR, CGGH…ICRQ, and CGHK…PCKE. Positions 1006 to 1071 constitute an R3H domain; it reads TKSVYETLTD…NRNVVATAHK (66 aa).

It belongs to the NFX1 family. In terms of tissue distribution, ovaries and embryonic central nervous system.

It is found in the nucleus. Its function is as follows. Plays an essential role during the late stages of embryonic neurogenesis. May either fine-tune the guidance or the spatial maintenance of the migrating SNB and in nerve roots, which are composed of axons originating from distinct groups of motor neurons and may be required to either guide or maintain the position of these nerves along a direct and straight path to their ultimate targets in particular muscle fields. May play a role in egg chamber development and/or may confer essential maternal contributions to the early embryo. This chain is Protein shuttle craft (stc), found in Drosophila melanogaster (Fruit fly).